Here is a 158-residue protein sequence, read N- to C-terminus: Endoribonuclease YbeY (158 aa).

Residues histidine 117, histidine 121, and histidine 127 each contribute to the Zn(2+) site.

This sequence belongs to the endoribonuclease YbeY family. Zn(2+) serves as cofactor.

Its subcellular location is the cytoplasm. In terms of biological role, single strand-specific metallo-endoribonuclease involved in late-stage 70S ribosome quality control and in maturation of the 3' terminus of the 16S rRNA. This Psychromonas ingrahamii (strain DSM 17664 / CCUG 51855 / 37) protein is Endoribonuclease YbeY.